Consider the following 559-residue polypeptide: AP-4 complex accessory subunit tepsin (559 aa).

An ENTH domain is found at 2–135 (LDRLAFLQQL…FSESIPSPSH (134 aa)). Disordered stretches follow at residues 131–157 (PSPSHTVSAKERSQSGMGSQASSAPAL), 214–290 (AIPS…ESLD), and 472–491 (PNGAANQKNPNGSTEKSDPA). 2 stretches are compositionally biased toward low complexity: residues 144–154 (QSGMGSQASSA) and 266–281 (SRSSDVGSKSGSDGQS). Residues 472 to 485 (PNGAANQKNPNGST) are compositionally biased toward polar residues.

The protein resides in the golgi apparatus. It localises to the trans-Golgi network membrane. Its subcellular location is the cytoplasmic vesicle. The protein localises to the cytoplasm. It is found in the cytosol. Its function is as follows. May play a role in vesicular trafficking of proteins at the trans-Golgi network. The chain is AP-4 complex accessory subunit tepsin from Xenopus laevis (African clawed frog).